An 84-amino-acid chain; its full sequence is Small ribosomal subunit protein uS17 (84 aa).

This sequence belongs to the universal ribosomal protein uS17 family. In terms of assembly, part of the 30S ribosomal subunit.

One of the primary rRNA binding proteins, it binds specifically to the 5'-end of 16S ribosomal RNA. In Yersinia enterocolitica serotype O:8 / biotype 1B (strain NCTC 13174 / 8081), this protein is Small ribosomal subunit protein uS17.